Here is a 260-residue protein sequence, read N- to C-terminus: Isoprenyl transferase (260 aa).

The active site involves Asp-40. Asp-40 provides a ligand contact to Mg(2+). Residues 41 to 44 (GNGR), Trp-45, Arg-53, His-57, and 85 to 87 (STE) each bind substrate. Residue Asn-88 is the Proton acceptor of the active site. Substrate is bound by residues Trp-89, Arg-91, Arg-208, and 214–216 (RLS). Glu-227 provides a ligand contact to Mg(2+).

This sequence belongs to the UPP synthase family. As to quaternary structure, homodimer. The cofactor is Mg(2+).

Catalyzes the condensation of isopentenyl diphosphate (IPP) with allylic pyrophosphates generating different type of terpenoids. The sequence is that of Isoprenyl transferase from Bacillus subtilis (strain 168).